Reading from the N-terminus, the 406-residue chain is O-glycosyltransferase PaGT (406 aa).

A disordered region spans residues 1–26 (MSPPSQIKPPQGTTPVPPSELDPRSD).

It belongs to the afumC glycosyltransferase family.

The protein operates within mycotoxin biosynthesis. O-glycosyltransferase; part of the 2 gene clusters that mediate the biosynthesis of fusicoccins, diterpene glucosides that display phytohormone-like activity and function as potent activators of plasma membrane H(+)-ATPases in plants by modifying 14-3-3 proteins and cause the plant disease constriction canker. The first step in the pathway is performed by the fusicoccadiene synthase PaFS that possesses both prenyl transferase and terpene cyclase activity, converting isopentenyl diphosphate and dimethylallyl diphosphate into geranylgeranyl diphosphate (GGDP) and successively converting GGDP into fusicocca-2,10(14)-diene, a precursor for fusicoccin H. The second step is the oxidation at the C-8 position by the cytochrome P450 monooxygenase PaP450-2 to yield fusicocca-2,10(14)-diene-8-beta-ol. The cytochrome P450 monooxygenase PaP450-1 then catalyzes the hydroxylation at the C-16 position to produce fusicocca-2,10(14)-diene-8-beta,16-diol. The dioxygenase fc-dox then catalyzes the 16-oxydation of fusicocca-2,10(14)-diene-8-beta,16-diol to yield an aldehyde (8-beta-hydroxyfusicocca-1,10(14)-dien-16-al). The short-chain dehydrogenase/reductase fc-sdr catalyzes the reduction of the aldehyde to yield fusicocca-1,10(14)-diene-8-beta,16-diol. The next step is the hydroxylation at C-9 performed by the cytochrome P450 monooxygenase PaP450-3 that leads to fusicoccin H aglycon which is glycosylated to fusicoccin H by the O-glycosyltransferase PaGT. Hydroxylation at C-12 by the cytochrome P450 monooxygenase PaP450-4 leads then to the production of fusicoccin Q and is followed by methylation by the O-methyltransferase PaMT to yield fusicoccin P. Fusicoccin P is further converted to fusicoccin J via prenylation by the O-glucose prenyltransferase PaPT. Cytochrome P450 monooxygenase PaP450-5 then performs hydroxylation at C-19 to yield dideacetyl-fusicoccin A which is acetylated to 3'-O-deacetyl-fusicoccin A by the O-acetyltransferase PaAT-2. Finally, a another acetylation by the O-acetyltransferase PaAT-1 yields fusicoccin A. In Phomopsis amygdali (Fusicoccum amygdali), this protein is O-glycosyltransferase PaGT.